The primary structure comprises 258 residues: Neurotrophin-3 (258 aa).

The first 18 residues, 1 to 18, serve as a signal peptide directing secretion; the sequence is MSILFYVIFLAYLRGIQG. Positions 19–139 are excised as a propeptide; sequence NNMDQRSLPE…TNRTSPRRKR (121 aa). Residues 60 to 85 form a disordered region; the sequence is QSTLPKAEAPREPEQGEATRSEFQPM. The span at 67 to 79 shows a compositional bias: basic and acidic residues; the sequence is EAPREPEQGEATR. Residue asparagine 131 is glycosylated (N-linked (GlcNAc...) asparagine). Intrachain disulfides connect cysteine 153/cysteine 218, cysteine 196/cysteine 247, and cysteine 206/cysteine 249.

The protein belongs to the NGF-beta family. In terms of tissue distribution, brain and peripheral tissues.

It is found in the secreted. Its function is as follows. Seems to promote the survival of visceral and proprioceptive sensory neurons. In Rattus norvegicus (Rat), this protein is Neurotrophin-3 (Ntf3).